Here is a 232-residue protein sequence, read N- to C-terminus: Putative N-acetylmannosamine-6-phosphate 2-epimerase (232 aa).

The protein belongs to the NanE family.

The enzyme catalyses an N-acyl-D-glucosamine 6-phosphate = an N-acyl-D-mannosamine 6-phosphate. It participates in amino-sugar metabolism; N-acetylneuraminate degradation; D-fructose 6-phosphate from N-acetylneuraminate: step 3/5. Functionally, converts N-acetylmannosamine-6-phosphate (ManNAc-6-P) to N-acetylglucosamine-6-phosphate (GlcNAc-6-P). This chain is Putative N-acetylmannosamine-6-phosphate 2-epimerase, found in Synechococcus elongatus (strain ATCC 33912 / PCC 7942 / FACHB-805) (Anacystis nidulans R2).